A 319-amino-acid chain; its full sequence is D-alanine--D-alanine ligase (319 aa).

The ATP-grasp domain maps to 120–315 (KRVLAQAGVP…YPELLRRLVE (196 aa)). 147-198 (DPPFFVKPANTGSSVGISRVERFQDLEAALALAFRYDEKAVVEKALSPVREL) lines the ATP pocket. Residues aspartate 270, glutamate 282, and asparagine 284 each contribute to the Mg(2+) site.

It belongs to the D-alanine--D-alanine ligase family. It depends on Mg(2+) as a cofactor. The cofactor is Mn(2+).

The protein localises to the cytoplasm. It carries out the reaction 2 D-alanine + ATP = D-alanyl-D-alanine + ADP + phosphate + H(+). Its pathway is cell wall biogenesis; peptidoglycan biosynthesis. In terms of biological role, cell wall formation. The protein is D-alanine--D-alanine ligase of Thermus thermophilus (strain ATCC 27634 / DSM 579 / HB8).